Reading from the N-terminus, the 176-residue chain is Large ribosomal subunit protein uL10 (176 aa).

It belongs to the universal ribosomal protein uL10 family. As to quaternary structure, part of the ribosomal stalk of the 50S ribosomal subunit. The N-terminus interacts with L11 and the large rRNA to form the base of the stalk. The C-terminus forms an elongated spine to which L12 dimers bind in a sequential fashion forming a multimeric L10(L12)X complex.

In terms of biological role, forms part of the ribosomal stalk, playing a central role in the interaction of the ribosome with GTP-bound translation factors. The polypeptide is Large ribosomal subunit protein uL10 (rplJ) (Streptomyces coelicolor (strain ATCC BAA-471 / A3(2) / M145)).